We begin with the raw amino-acid sequence, 310 residues long: Methionyl-tRNA formyltransferase (310 aa).

Position 111–114 (111–114 (SLLP)) interacts with (6S)-5,6,7,8-tetrahydrofolate.

The protein belongs to the Fmt family.

It catalyses the reaction L-methionyl-tRNA(fMet) + (6R)-10-formyltetrahydrofolate = N-formyl-L-methionyl-tRNA(fMet) + (6S)-5,6,7,8-tetrahydrofolate + H(+). Its function is as follows. Attaches a formyl group to the free amino group of methionyl-tRNA(fMet). The formyl group appears to play a dual role in the initiator identity of N-formylmethionyl-tRNA by promoting its recognition by IF2 and preventing the misappropriation of this tRNA by the elongation apparatus. The chain is Methionyl-tRNA formyltransferase from Afipia carboxidovorans (strain ATCC 49405 / DSM 1227 / KCTC 32145 / OM5) (Oligotropha carboxidovorans).